Here is a 270-residue protein sequence, read N- to C-terminus: MSEMEQQPICKIALGIEYDGSKYYGWQRQNEVRSVQEKLEKALSQVANEPITVFCAGRTDAGVHGTGQVVHFETRAQRKDAAWTLGVNANLPGDIAVRWVKHVPADFHARFSATARRYRYVIYNHRLRPAVLSQGVTHFHQPLDAERMQRAAQCLLGENDFTSFRAVQCQSRTPWRNVMHINVTRYGAYVVVDIKANAFVHHMVRNIVGSLMEVGAGNQPESWMAELLAAKDRTLAAATAKAEGLYLVSVDYPAHYDLPVLPMGPLFLAD.

Residue D60 is the Nucleophile of the active site. Residues 107–111 (FHARF) are RNA binding. Y118 lines the substrate pocket. An interaction with tRNA region spans residues 168-172 (QCQSR).

This sequence belongs to the tRNA pseudouridine synthase TruA family. As to quaternary structure, homodimer.

It catalyses the reaction uridine(38/39/40) in tRNA = pseudouridine(38/39/40) in tRNA. Its function is as follows. Formation of pseudouridine at positions 38, 39 and 40 in the anticodon stem and loop of transfer RNAs. The protein is tRNA pseudouridine synthase A of Klebsiella pneumoniae subsp. pneumoniae (strain ATCC 700721 / MGH 78578).